The primary structure comprises 526 residues: Peptide chain release factor 3 (526 aa).

Residues 11 to 277 (SKRRTFAIIS…SLIKWAPSPL (267 aa)) form the tr-type G domain. Residues 20 to 27 (SHPDAGKT), 88 to 92 (DTPGH), and 142 to 145 (NKLD) each bind GTP.

The protein belongs to the TRAFAC class translation factor GTPase superfamily. Classic translation factor GTPase family. PrfC subfamily.

Its subcellular location is the cytoplasm. Functionally, increases the formation of ribosomal termination complexes and stimulates activities of RF-1 and RF-2. It binds guanine nucleotides and has strong preference for UGA stop codons. It may interact directly with the ribosome. The stimulation of RF-1 and RF-2 is significantly reduced by GTP and GDP, but not by GMP. This is Peptide chain release factor 3 (prfC) from Buchnera aphidicola subsp. Acyrthosiphon pisum (strain APS) (Acyrthosiphon pisum symbiotic bacterium).